The sequence spans 1045 residues: B3 domain-containing protein REM13 (1045 aa).

The TF-B3 1 DNA-binding region spans 7 to 96; it reads YPQFFHTLVP…VFHVSNLGPN (90 aa). Positions 121 to 147 are disordered; the sequence is NNGDVCDSEELPKEKKAKTNSEEADAV. Positions 130–141 are enriched in basic and acidic residues; the sequence is ELPKEKKAKTNS. 2 consecutive DNA-binding regions (TF-B3) follow at residues 157 to 253 and 305 to 398; these read CFMA…FCPT and FVTF…CSPE. Positions 423–449 are disordered; that stretch reads NRDKISNNDKEENMSWERKKDHLKSRD. The segment at residues 474–570 is a DNA-binding region (TF-B3 4); it reads SNDSCLVVVS…TPVLSLCPAD (97 aa). Residues 606–625 are disordered; the sequence is IKDDNSKEKNDKEESKSVDG. 3 DNA-binding regions (TF-B3) span residues 643 to 738, 815 to 910, and 940 to 1035; these read FVTL…LRTE, FVTF…LRTK, and FVTL…LKFS.

The protein localises to the nucleus. In Arabidopsis thaliana (Mouse-ear cress), this protein is B3 domain-containing protein REM13 (REM13).